Consider the following 37-residue polypeptide: Large ribosomal subunit protein bL36 (37 aa).

Belongs to the bacterial ribosomal protein bL36 family.

The polypeptide is Large ribosomal subunit protein bL36 (Nostoc punctiforme (strain ATCC 29133 / PCC 73102)).